The primary structure comprises 142 residues: Protein spalt-accessory (142 aa).

An N-terminal signal peptide occupies residues 1-16 (MKLLIALFVLVNAVIA). A compositionally biased stretch (gly residues) spans 65 to 77 (GQGGVSPGQGGFA). The interval 65–142 (GQGGVSPGQG…HHEHHGHHRH (78 aa)) is disordered. The segment covering 112-124 (NHHEYPEHHGDHH) has biased composition (basic and acidic residues). Over residues 125-142 (REHHEHHGHHEHHGHHRH) the composition is skewed to basic residues.

The protein resides in the secreted. Functionally, likely to be involved in the establishment of the head. This chain is Protein spalt-accessory (sala), found in Drosophila orena (Fruit fly).